The primary structure comprises 490 residues: UDP-N-acetylmuramoyl-L-alanyl-D-glutamate--2,6-diaminopimelate ligase (490 aa).

Residue serine 31 coordinates UDP-N-acetyl-alpha-D-muramoyl-L-alanyl-D-glutamate. Glycine 109–serine 115 lines the ATP pocket. UDP-N-acetyl-alpha-D-muramoyl-L-alanyl-D-glutamate is bound by residues asparagine 150, threonine 151 to threonine 152, serine 178, and arginine 186. Position 218 is an N6-carboxylysine (lysine 218). Meso-2,6-diaminopimelate is bound by residues arginine 384, aspartate 408 to arginine 411, glycine 458, and glutamate 462. Positions aspartate 408–arginine 411 match the Meso-diaminopimelate recognition motif motif.

It belongs to the MurCDEF family. MurE subfamily. Mg(2+) serves as cofactor. Carboxylation is probably crucial for Mg(2+) binding and, consequently, for the gamma-phosphate positioning of ATP.

Its subcellular location is the cytoplasm. The catalysed reaction is UDP-N-acetyl-alpha-D-muramoyl-L-alanyl-D-glutamate + meso-2,6-diaminopimelate + ATP = UDP-N-acetyl-alpha-D-muramoyl-L-alanyl-gamma-D-glutamyl-meso-2,6-diaminopimelate + ADP + phosphate + H(+). It participates in cell wall biogenesis; peptidoglycan biosynthesis. Its function is as follows. Catalyzes the addition of meso-diaminopimelic acid to the nucleotide precursor UDP-N-acetylmuramoyl-L-alanyl-D-glutamate (UMAG) in the biosynthesis of bacterial cell-wall peptidoglycan. This chain is UDP-N-acetylmuramoyl-L-alanyl-D-glutamate--2,6-diaminopimelate ligase, found in Bacillus velezensis (strain DSM 23117 / BGSC 10A6 / LMG 26770 / FZB42) (Bacillus amyloliquefaciens subsp. plantarum).